We begin with the raw amino-acid sequence, 529 residues long: Beta-galactoside alpha-2,6-sialyltransferase 2 (529 aa).

The Cytoplasmic portion of the chain corresponds to 1-11 (MKPHLKQWRQR). Residues 12–32 (MLFGIFAWGLLFLLIFIYFTD) traverse the membrane as a helical; Signal-anchor for type II membrane protein segment. The Lumenal segment spans residues 33–529 (SNPAEPVPSS…PAPSPVIPHS (497 aa)). A glycan (O-linked (GalNAc...) serine) is linked at S69. N211 is a glycosylation site (N-linked (GlcNAc...) asparagine). Cystine bridges form between C253–C519, C296–C448, and C466–C477.

Belongs to the glycosyltransferase 29 family. Post-translationally, O-glycosylated. In terms of tissue distribution, weakly expressed in some tissues, such as small intestine, colon and fetal brain.

The protein resides in the golgi apparatus. The protein localises to the golgi stack membrane. It catalyses the reaction a beta-D-galactoside + CMP-N-acetyl-beta-neuraminate = an N-acetyl-alpha-neuraminyl-(2-&gt;6)-beta-D-galactosyl derivative + CMP + H(+). Its function is as follows. Transfers sialic acid from the donor of substrate CMP-sialic acid to galactose containing acceptor substrates. Has alpha-2,6-sialyltransferase activity toward oligosaccharides that have the Gal-beta-1,4-GlcNAc sequence at the non-reducing end of their carbohydrate groups, but it has weak or no activities toward glycoproteins and glycolipids. This is Beta-galactoside alpha-2,6-sialyltransferase 2 (ST6GAL2) from Homo sapiens (Human).